The following is a 404-amino-acid chain: Snake venom metalloproteinase H5 (404 aa).

An N-terminal signal peptide occupies residues 1–6; it reads FPYQGS. Residues 7–177 constitute a propeptide that is removed on maturation; the sequence is SIMLESGKVN…KPSWVNLTPK (171 aa). Residues 184 to 379 enclose the Peptidase M12B domain; sequence TSVNLQLVVD…KKPKCIHKKS (196 aa). Intrachain disulfides connect cysteine 295–cysteine 374, cysteine 336–cysteine 358, and cysteine 338–cysteine 341. Residue histidine 320 coordinates Zn(2+). Residue glutamate 321 is part of the active site. Residues histidine 324 and histidine 330 each contribute to the Zn(2+) site. The propeptide occupies 379 to 404; sequence SLKTDTVSTSVSGNEPLDDNVDGFHA. The interval 385-404 is disordered; the sequence is VSTSVSGNEPLDDNVDGFHA. Residues 394–404 show a composition bias toward acidic residues; it reads PLDDNVDGFHA.

In terms of assembly, monomer. Requires Zn(2+) as cofactor. As to expression, expressed by the venom gland.

Its subcellular location is the secreted. Its function is as follows. This probable venom zinc protease is not hemorrhagic when 3 ug are injected onto the back skin of guinea pig. This chain is Snake venom metalloproteinase H5, found in Deinagkistrodon acutus (Hundred-pace snake).